Here is a 332-residue protein sequence, read N- to C-terminus: Glycerol-3-phosphate dehydrogenase [NAD(P)+] (332 aa).

NADPH-binding residues include Ser11, Phe12, Lys32, and Lys106. Lys106, Gly137, and Ser139 together coordinate sn-glycerol 3-phosphate. Ala141 is a binding site for NADPH. The sn-glycerol 3-phosphate site is built by Lys192, Asp245, Ser255, Arg256, and Asn257. The active-site Proton acceptor is the Lys192. Arg256 provides a ligand contact to NADPH. The NADPH site is built by Val280 and Glu282.

Belongs to the NAD-dependent glycerol-3-phosphate dehydrogenase family.

The protein localises to the cytoplasm. It catalyses the reaction sn-glycerol 3-phosphate + NAD(+) = dihydroxyacetone phosphate + NADH + H(+). The enzyme catalyses sn-glycerol 3-phosphate + NADP(+) = dihydroxyacetone phosphate + NADPH + H(+). It functions in the pathway membrane lipid metabolism; glycerophospholipid metabolism. In terms of biological role, catalyzes the reduction of the glycolytic intermediate dihydroxyacetone phosphate (DHAP) to sn-glycerol 3-phosphate (G3P), the key precursor for phospholipid synthesis. The protein is Glycerol-3-phosphate dehydrogenase [NAD(P)+] of Staphylococcus haemolyticus (strain JCSC1435).